The primary structure comprises 234 residues: Small ribosomal subunit protein uS3 (234 aa).

A KH type-2 domain is found at 39 to 107 (VRKFLNKELA…PAQINIAEVK (69 aa)).

The protein belongs to the universal ribosomal protein uS3 family. In terms of assembly, part of the 30S ribosomal subunit. Forms a tight complex with proteins S10 and S14.

Binds the lower part of the 30S subunit head. Binds mRNA in the 70S ribosome, positioning it for translation. The polypeptide is Small ribosomal subunit protein uS3 (Haemophilus ducreyi (strain 35000HP / ATCC 700724)).